The chain runs to 303 residues: Large ribosomal subunit protein uL1m (303 aa).

It belongs to the universal ribosomal protein uL1 family. As to quaternary structure, component of the mitochondrial large ribosomal subunit (mt-LSU). Mature N.crassa 74S mitochondrial ribosomes consist of a small (37S) and a large (54S) subunit. The 37S small subunit contains a 16S ribosomal RNA (16S mt-rRNA) and 32 different proteins. The 54S large subunit contains a 23S rRNA (23S mt-rRNA) and 42 different proteins.

Its subcellular location is the mitochondrion. Component of the mitochondrial ribosome (mitoribosome), a dedicated translation machinery responsible for the synthesis of mitochondrial genome-encoded proteins, including at least some of the essential transmembrane subunits of the mitochondrial respiratory chain. The mitoribosomes are attached to the mitochondrial inner membrane and translation products are cotranslationally integrated into the membrane. The polypeptide is Large ribosomal subunit protein uL1m (mrpl1) (Neurospora crassa (strain ATCC 24698 / 74-OR23-1A / CBS 708.71 / DSM 1257 / FGSC 987)).